The following is a 387-amino-acid chain: Putative glutamate--cysteine ligase 2 (387 aa).

The protein belongs to the glutamate--cysteine ligase type 2 family. YbdK subfamily.

The enzyme catalyses L-cysteine + L-glutamate + ATP = gamma-L-glutamyl-L-cysteine + ADP + phosphate + H(+). Functionally, ATP-dependent carboxylate-amine ligase which exhibits weak glutamate--cysteine ligase activity. This Pseudomonas fluorescens (strain ATCC BAA-477 / NRRL B-23932 / Pf-5) protein is Putative glutamate--cysteine ligase 2.